The chain runs to 386 residues: Succinate--CoA ligase [ADP-forming] subunit beta (386 aa).

Positions 9 to 244 (KELLRQYGVA…LDEEDPKEIE (236 aa)) constitute an ATP-grasp domain. ATP contacts are provided by residues Lys-46, 53-55 (GRG), Glu-99, Cys-102, and Glu-107. Mg(2+) contacts are provided by Asn-199 and Asp-213. Residues Asn-264 and 321–323 (GIM) contribute to the substrate site.

This sequence belongs to the succinate/malate CoA ligase beta subunit family. As to quaternary structure, heterotetramer of two alpha and two beta subunits. The cofactor is Mg(2+).

The enzyme catalyses succinate + ATP + CoA = succinyl-CoA + ADP + phosphate. It catalyses the reaction GTP + succinate + CoA = succinyl-CoA + GDP + phosphate. The protein operates within carbohydrate metabolism; tricarboxylic acid cycle; succinate from succinyl-CoA (ligase route): step 1/1. In terms of biological role, succinyl-CoA synthetase functions in the citric acid cycle (TCA), coupling the hydrolysis of succinyl-CoA to the synthesis of either ATP or GTP and thus represents the only step of substrate-level phosphorylation in the TCA. The beta subunit provides nucleotide specificity of the enzyme and binds the substrate succinate, while the binding sites for coenzyme A and phosphate are found in the alpha subunit. This chain is Succinate--CoA ligase [ADP-forming] subunit beta, found in Halalkalibacterium halodurans (strain ATCC BAA-125 / DSM 18197 / FERM 7344 / JCM 9153 / C-125) (Bacillus halodurans).